The following is a 234-amino-acid chain: UPF0173 metal-dependent hydrolase RHECIAT_CH0001941 (234 aa).

Belongs to the UPF0173 family.

This chain is UPF0173 metal-dependent hydrolase RHECIAT_CH0001941, found in Rhizobium etli (strain CIAT 652).